Here is a 237-residue protein sequence, read N- to C-terminus: Small ribosomal subunit protein uS2m (237 aa).

This sequence belongs to the universal ribosomal protein uS2 family.

Its subcellular location is the mitochondrion. This is Small ribosomal subunit protein uS2m (RPS2) from Marchantia polymorpha (Common liverwort).